Reading from the N-terminus, the 455-residue chain is Gamma-aminobutyric acid receptor subunit alpha-1 (455 aa).

Positions 1–27 are cleaved as a signal peptide; the sequence is MKRLLVLCDCLWAWSLLLNALTERSYG. The Extracellular portion of the chain corresponds to 28 to 253; the sequence is QTSSQDELKD…FHLKRKIGYF (226 aa). An N-linked (GlcNAc...) asparagine glycan is attached at N38. R94 serves as a coordination point for 4-aminobutanoate. N138 carries an N-linked (GlcNAc...) asparagine glycan. A 4-aminobutanoate-binding site is contributed by T157. C166 and C180 are joined by a disulfide. A helical transmembrane segment spans residues 254-274; the sequence is VIQTYLPCIMTVILSQVSFWL. The Cytoplasmic segment spans residues 275–279; the sequence is NRESV. The helical transmembrane segment at 280-301 threads the bilayer; the sequence is PARTVFGVTTVLTMTTLSISAR. At 302-311 the chain is on the extracellular side; that stretch reads NSLPKVAYAT. The chain crosses the membrane as a helical span at residues 312–333; it reads AMDWFIAVCYAFVFSALIEFAT. Over 334–420 the chain is Cytoplasmic; sequence VNYFTKRGYA…TFNSVSKIDR (87 aa). The helical transmembrane segment at 421–440 threads the bilayer; the sequence is LSRIAFPLLFGIFNLVYWAT. The Extracellular segment spans residues 441 to 455; sequence YLNREPQLKAPTPHQ.

It belongs to the ligand-gated ion channel (TC 1.A.9) family. Gamma-aminobutyric acid receptor (TC 1.A.9.5) subfamily. GABRA1 sub-subfamily. As to quaternary structure, heteropentamer, formed by a combination of alpha (GABRA1-6), beta (GABRB1-3), gamma (GABRG1-3), delta (GABRD), epsilon (GABRE), rho (GABRR1-3), pi (GABRP) and theta (GABRQ) subunits, each subunit exhibiting distinct physiological and pharmacological properties. Brain.

The protein resides in the postsynaptic cell membrane. The protein localises to the cell membrane. The catalysed reaction is chloride(in) = chloride(out). With respect to regulation, allosterically activated by benzodiazepines, the neuroanesthetic alphaxalone and pentobarbital. Inhibited by the antagonist bicuculline. Potentiated by histamine. Its function is as follows. Alpha subunit of the heteropentameric ligand-gated chloride channel gated by gamma-aminobutyric acid (GABA), a major inhibitory neurotransmitter in the brain. GABA-gated chloride channels, also named GABA(A) receptors (GABAAR), consist of five subunits arranged around a central pore and contain GABA active binding site(s) located at the alpha and beta subunit interface(s). When activated by GABA, GABAARs selectively allow the flow of chloride anions across the cell membrane down their electrochemical gradient. Chloride influx into the postsynaptic neuron following GABAAR opening decreases the neuron ability to generate a new action potential, thereby reducing nerve transmission. The GABAARs can also initiate the formation of functional inhibitory GABAergic synapses. GABAARs function also as histamine receptor where histamine binds at the interface of two neighboring beta subunits and potentiates GABA response. This chain is Gamma-aminobutyric acid receptor subunit alpha-1 (GABRA1), found in Gallus gallus (Chicken).